Consider the following 607-residue polypeptide: UvrABC system protein C (607 aa).

Residues 16 to 94 (ARPGVYRMFD…IKQWRPPYNI (79 aa)) form the GIY-YIG domain. The UVR domain maps to 203–238 (QQLGNELNAEMEKAAMALNFEKAAELRDQIALLRRV).

The protein belongs to the UvrC family. In terms of assembly, interacts with UvrB in an incision complex.

It localises to the cytoplasm. The UvrABC repair system catalyzes the recognition and processing of DNA lesions. UvrC both incises the 5' and 3' sides of the lesion. The N-terminal half is responsible for the 3' incision and the C-terminal half is responsible for the 5' incision. The sequence is that of UvrABC system protein C from Pseudomonas putida (strain W619).